A 277-amino-acid polypeptide reads, in one-letter code: Diaminopimelate epimerase (277 aa).

Residues Asn-17, Gln-50, and Asn-68 each contribute to the substrate site. Catalysis depends on Cys-77, which acts as the Proton donor. Substrate contacts are provided by residues 78 to 79 (GN), Asn-162, Asn-195, and 213 to 214 (ER). The Proton acceptor role is filled by Cys-222. 223–224 (GT) is a binding site for substrate.

This sequence belongs to the diaminopimelate epimerase family. As to quaternary structure, homodimer.

It is found in the cytoplasm. The enzyme catalyses (2S,6S)-2,6-diaminopimelate = meso-2,6-diaminopimelate. The protein operates within amino-acid biosynthesis; L-lysine biosynthesis via DAP pathway; DL-2,6-diaminopimelate from LL-2,6-diaminopimelate: step 1/1. Its function is as follows. Catalyzes the stereoinversion of LL-2,6-diaminopimelate (L,L-DAP) to meso-diaminopimelate (meso-DAP), a precursor of L-lysine and an essential component of the bacterial peptidoglycan. The protein is Diaminopimelate epimerase of Phenylobacterium zucineum (strain HLK1).